We begin with the raw amino-acid sequence, 131 residues long: Small ribosomal subunit protein bS16 (131 aa).

A disordered region spans residues 87–131 (PGAEGTYRVPTANTKPPRIPGGGAAKAVEAPAEAPAEAETPASES). Residues 111-131 (AKAVEAPAEAPAEAETPASES) show a composition bias toward low complexity.

The protein belongs to the bacterial ribosomal protein bS16 family.

In Kineococcus radiotolerans (strain ATCC BAA-149 / DSM 14245 / SRS30216), this protein is Small ribosomal subunit protein bS16.